Reading from the N-terminus, the 295-residue chain is Elongation factor Ts (295 aa).

The interval 79-82 (TDFV) is involved in Mg(2+) ion dislocation from EF-Tu.

This sequence belongs to the EF-Ts family.

It localises to the cytoplasm. Functionally, associates with the EF-Tu.GDP complex and induces the exchange of GDP to GTP. It remains bound to the aminoacyl-tRNA.EF-Tu.GTP complex up to the GTP hydrolysis stage on the ribosome. The polypeptide is Elongation factor Ts (Mycoplasma capricolum subsp. capricolum (strain California kid / ATCC 27343 / NCTC 10154)).